A 573-amino-acid polypeptide reads, in one-letter code: Chromosomal replication initiator protein DnaA (573 aa).

Residues 1 to 85 (MSQNSSSLLE…TKVLSMRMGR (85 aa)) form a domain I, interacts with DnaA modulators region. The interval 85 to 231 (RSFSLAVSVE…TPAHNPNREV (147 aa)) is domain II. A disordered region spans residues 91 to 232 (VSVEPSRDGE…PAHNPNREVS (142 aa)). Low complexity predominate over residues 116–169 (PYPGQGPQSPQGQQGQQGQHPVQQEVRAHAPAPHQQGQHQAAQHQPPANQAPGQ). Polar residues predominate over residues 178-191 (QASQSAGAWEQTHS). A compositionally biased stretch (pro residues) spans 202–213 (SPAPVEPPPQPA). The domain III, AAA+ region stretch occupies residues 232–448 (SLNPKYTFEN…GALIRVSAYS (217 aa)). ATP contacts are provided by G276, G278, K279, and T280. Residues 449–573 (SLINQPIDKE…TQLIKSRGRN (125 aa)) form a domain IV, binds dsDNA region.

It belongs to the DnaA family. As to quaternary structure, oligomerizes as a right-handed, spiral filament on DNA at oriC.

The protein resides in the cytoplasm. In terms of biological role, plays an essential role in the initiation and regulation of chromosomal replication. ATP-DnaA binds to the origin of replication (oriC) to initiate formation of the DNA replication initiation complex once per cell cycle. Binds the DnaA box (a 9 base pair repeat at the origin) and separates the double-stranded (ds)DNA. Forms a right-handed helical filament on oriC DNA; dsDNA binds to the exterior of the filament while single-stranded (ss)DNA is stabiized in the filament's interior. The ATP-DnaA-oriC complex binds and stabilizes one strand of the AT-rich DNA unwinding element (DUE), permitting loading of DNA polymerase. After initiation quickly degrades to an ADP-DnaA complex that is not apt for DNA replication. Binds acidic phospholipids. This is Chromosomal replication initiator protein DnaA from Corynebacterium efficiens (strain DSM 44549 / YS-314 / AJ 12310 / JCM 11189 / NBRC 100395).